Here is a 326-residue protein sequence, read N- to C-terminus: Transcription factor WRKY45-1 (326 aa).

2 disordered regions span residues Gly-67–Val-114 and Gly-252–Asp-288. Positions Val-112–Pro-180 form a DNA-binding region, WRKY. The span at Arg-273 to Gly-283 shows a compositional bias: gly residues.

Belongs to the WRKY group III family. As to expression, expressed in aleurone cells.

The protein localises to the nucleus. Its function is as follows. Transcriptional activator involved in defense responses against pathogens. Acts as a positive regulator of defense responses against the rice blast fungus Magnaporthe oryzae. Acts through W-boxes, which are cis-elements that are enriched in the promoters of several defense-related genes. Plays an important role in the benzothiadiazole-induced disease resistance by mediating salicylic acid (SA) defense signaling pathway, independently of the disease resistance gene NPR1/NH1. Acts as a negative regulator of defense responses against the bacterial blight Xanthomonas oryzae pv oryzae (Xoo) and the bacterial streak Xanthomonas oryzae pv oryzicola (Xoc). Acts downstream of abscisic acid (ABA) signaling in response to the rice blast fungus. ABA is a negative regulator of defense responses that interacts antagonistically with salicylic acid (SA) signaling pathway. Acts as a negative regulator of ABA signaling that suppresses growth of seedlings. Does not seem to be involved in the regulation of salt stress response. Acts as a negative regulator of cold stress response. Acts as a negative regulator of drought stress response. The chain is Transcription factor WRKY45-1 from Oryza sativa subsp. japonica (Rice).